The chain runs to 547 residues: TBCC domain-containing protein 1 (547 aa).

Residues 304–435 (PHTHRMVVMS…LEDHMAHTGL (132 aa)) enclose the C-CAP/cofactor C-like domain.

This sequence belongs to the TBCC family.

It localises to the cytoplasm. It is found in the cytoskeleton. The protein localises to the microtubule organizing center. The protein resides in the centrosome. Its subcellular location is the spindle pole. May play a role in the regulation of centrosome and Golgi apparatus positioning. This Xenopus tropicalis (Western clawed frog) protein is TBCC domain-containing protein 1 (tbccd1).